Consider the following 372-residue polypeptide: NAD(P)H-quinone oxidoreductase subunit 1 (372 aa).

Helical transmembrane passes span 29-49, 97-117, 130-150, 176-196, 204-224, 254-274, 308-328, and 347-367; these read WIPL…LVVV, WLFT…YLIV, VGIF…LMSG, LAFS…IDIV, ILGW…IAAL, FGLF…VFAI, SLGI…AVLL, and FLLP…LAFP.

The protein belongs to the complex I subunit 1 family. In terms of assembly, NDH-1 is composed of at least 11 different subunits.

It localises to the cellular thylakoid membrane. The catalysed reaction is a plastoquinone + NADH + (n+1) H(+)(in) = a plastoquinol + NAD(+) + n H(+)(out). It catalyses the reaction a plastoquinone + NADPH + (n+1) H(+)(in) = a plastoquinol + NADP(+) + n H(+)(out). Functionally, NDH-1 shuttles electrons from an unknown electron donor, via FMN and iron-sulfur (Fe-S) centers, to quinones in the respiratory and/or the photosynthetic chain. The immediate electron acceptor for the enzyme in this species is believed to be plastoquinone. Couples the redox reaction to proton translocation, and thus conserves the redox energy in a proton gradient. In Rippkaea orientalis (strain PCC 8801 / RF-1) (Cyanothece sp. (strain PCC 8801)), this protein is NAD(P)H-quinone oxidoreductase subunit 1.